We begin with the raw amino-acid sequence, 843 residues long: Protein P (843 aa).

Positions 1–177 (MPLSYQHFRK…FCGSPYSWEQ (177 aa)) are terminal protein domain (TP). Positions 178–346 (ELQHGRLVFQ…YCLTHIVNLL (169 aa)) are spacer. Disordered stretches follow at residues 220 to 273 (QSRL…SSTS) and 289 to 316 (LSTS…RSQS). Positions 289–299 (LSTSKRQSSSG) are enriched in polar residues. Positions 347 to 690 (EDWGPCTEHG…YLNLYPVARQ (344 aa)) are polymerase/reverse transcriptase domain (RT). One can recognise a Reverse transcriptase domain in the interval 357-600 (EHNIRIPRTP…YSLNFMGYVI (244 aa)). Asp-429, Asp-551, and Asp-552 together coordinate Mg(2+).

The protein belongs to the hepadnaviridae P protein family.

It carries out the reaction DNA(n) + a 2'-deoxyribonucleoside 5'-triphosphate = DNA(n+1) + diphosphate. It catalyses the reaction Endonucleolytic cleavage to 5'-phosphomonoester.. Its activity is regulated as follows. Activated by host HSP70 and HSP40 in vitro to be able to bind the epsilon loop of the pgRNA. Because deletion of the RNase H region renders the protein partly chaperone-independent, the chaperones may be needed indirectly to relieve occlusion of the RNA-binding site by this domain. Inhibited by several reverse-transcriptase inhibitors: Lamivudine, Adefovir and Entecavir. Functionally, multifunctional enzyme that converts the viral RNA genome into dsDNA in viral cytoplasmic capsids. This enzyme displays a DNA polymerase activity that can copy either DNA or RNA templates, and a ribonuclease H (RNase H) activity that cleaves the RNA strand of RNA-DNA heteroduplexes in a partially processive 3'- to 5'-endonucleasic mode. Neo-synthesized pregenomic RNA (pgRNA) are encapsidated together with the P protein, and reverse-transcribed inside the nucleocapsid. Initiation of reverse-transcription occurs first by binding the epsilon loop on the pgRNA genome, and is initiated by protein priming, thereby the 5'-end of (-)DNA is covalently linked to P protein. Partial (+)DNA is synthesized from the (-)DNA template and generates the relaxed circular DNA (RC-DNA) genome. After budding and infection, the RC-DNA migrates in the nucleus, and is converted into a plasmid-like covalently closed circular DNA (cccDNA). The activity of P protein does not seem to be necessary for cccDNA generation, and is presumably released from (+)DNA by host nuclear DNA repair machinery. The chain is Protein P from Hepatitis B virus genotype C subtype ad (isolate Japan/S-179/1988) (HBV-C).